We begin with the raw amino-acid sequence, 24 residues long: Glutamate dehydrogenase (24 aa).

It belongs to the Glu/Leu/Phe/Val dehydrogenases family. As to quaternary structure, homohexamer.

The protein localises to the cytoplasm. The enzyme catalyses L-glutamate + NAD(+) + H2O = 2-oxoglutarate + NH4(+) + NADH + H(+). It carries out the reaction L-glutamate + NADP(+) + H2O = 2-oxoglutarate + NH4(+) + NADPH + H(+). The protein is Glutamate dehydrogenase (gdhA) of Pyrococcus woesei.